Here is a 242-residue protein sequence, read N- to C-terminus: Zinc finger protein ZOP1 (242 aa).

The Matrin-type zinc-finger motif lies at 11 to 42 (KWCEFCKIWIQNNPTSIRNHDLGKRHRECVDK). The stretch at 42–71 (KKLTDMRERSAAKDKELKKNEKLLQQIEAK) forms a coiled coil. The disordered stretch occupies residues 154–242 (VKKPVSSSGA…PLLGLYNRPF (89 aa)). Residues 155–172 (KKPVSSSGAGPSVGKPPG) show a composition bias toward low complexity. Over residues 201 to 233 (RQDEKPKKVSAEEKAALKAREAARKRVEDREKP) the composition is skewed to basic and acidic residues.

Component of a pre-mRNA splicing complex. Interacts with STA1. Interacts with PRP31.

The protein localises to the nucleus. The protein resides in the cajal body. In terms of biological role, nucleic acid-binding protein that promotes Pol IV-dependent small interfering RNA (siRNA) accumulation, DNA methylation and transcriptional silencing. May possess both RNA-directed DNA methylation (RdDM)-dependent and -independent roles in transcriptional silencing. Acts as a pre-mRNA splicing factor that associates with several typical components of the splicing machinery as well as with Pol II. The protein is Zinc finger protein ZOP1 of Arabidopsis thaliana (Mouse-ear cress).